Here is a 668-residue protein sequence, read N- to C-terminus: MPELASVLVRDERSVLPGGFWAAVAVWLEKPQVLNKRLCGSTVGKKWDHVGEESESEGIDVETALAALLEDMSGPGRDEEMLKLISGYGKREEDSGSLTLRTLIPKSNPHFPSCQPRCEIVIRDLPNSVVTFLPLDEANQFKTNNIYQIRLAHVQDDEWSISLYTLCSEAWESDGVVYPKITWMKNELLSKLAKWSTEDKKSEFKSTLSLVPVDKYSRLYQNLKEKYRDMVKVWPEVTDPEKFVYEDVAIATYLLIIWEEERSQNQLKVKQSFVDLGCGNGLLVHILSNEGHPGRGIDVRRRKIWDMYGPQTILEESAILPNDDYLFPDTDWLIGNHSDELTPWLPVIASRSSYSCRYFVLPCCFFNFYGKYNRKSSKKTQYREYLDFVKEVGQQCGFNVEEDCLRIPSTKRVCLIGMSRTYPLTQEKRIDEQRTRYIKSQHTDSLHISTKSSLDKDDPPPLNCHAKNGQVDNVDSSLVQSEKLPGSWMPGFQPREKEEPIRNCALLPRDFIDETVLQVAKLLLYSNTKEKETPITDQSETVWNTGRSLTLREVAEHLHADTLQKLKNECGGLQTLLRNNHQVFKVINSNVSIRDWQKDTPTNTKKRKPEAKRTVPSDVLKTRLCWFYVHHPNGCPRVAKSCPYAHGAEELRPSFISRRKNPRNKLCT.

The tract at residues 441-460 is disordered; sequence QHTDSLHISTKSSLDKDDPP. The C3H1-type zinc finger occupies 620-649; that stretch reads LKTRLCWFYVHHPNGCPRVAKSCPYAHGAE.

Belongs to the TRM44 family.

The protein localises to the cytoplasm. It catalyses the reaction uridine(44) in tRNA(Ser) + S-adenosyl-L-methionine = 2'-O-methyluridine(44) in tRNA(Ser) + S-adenosyl-L-homocysteine + H(+). In terms of biological role, probable adenosyl-L-methionine (AdoMet)-dependent tRNA (uracil-O(2)-)-methyltransferase. The sequence is that of Probable tRNA (uracil-O(2)-)-methyltransferase (trmt44) from Xenopus laevis (African clawed frog).